The following is a 505-amino-acid chain: MRWLYSTSHKDIGLLYLVFAFFGGLLGTSLSMLIRYELALPGRGLLDGNGQLYNVIITGHGIIMLLFMVMPALFGGFGNWLLPIMIGAPDMAFPRLNNISFWLNPPALALLLLSTLVEQGPGTGWTAYPPLSVQHSGTSVDLAILSLHLNGLSSILGAVNMLVTVAGLRAPGMKLLHMPLFVWAIALTAVLVILAVPVLAAALVMLLTDRNINTAYFCESGDLILYQHLFWFFGHPEVYILILPAFGIVSQVVSFFSQKPVFGLTGMICAMGAISLLGFIVWAHHMFTVGLDLDTVAYFTSATMIIAVPTGMKIFSWMATIYSGRVWFTTPMWFAVGFICLFTLGGVTGVVLANAGVDMLVHDTYYVVAHFHYVLSMGAVFGIFAGVYFWGNLITGLGYHEGRAMVHFWLLFIGVNLTFFPQHFLGLAGMPRRMFDYADCFAGWNAVSSFGASISFISVIVFATTFQEAVRTVPRTATTLEWVLLATPAHHALSQVPVLRTASSH.

The helical transmembrane segment at leucine 14–isoleucine 34 threads the bilayer. The Ca(2+) site is built by glutamate 37 and glycine 42. The next 6 helical transmembrane spans lie at valine 55–glycine 75, asparagine 98–glutamate 118, alanine 143–valine 163, leucine 180–alanine 200, leucine 229–valine 249, and valine 261–valine 281. Fe(II)-heme a is bound at residue histidine 60. The Cu cation site is built by histidine 235 and tyrosine 239. The segment at residues histidine 235–tyrosine 239 is a cross-link (1'-histidyl-3'-tyrosine (His-Tyr)). Tyrosine 239 lines the O2 pocket. Residues histidine 284 and histidine 285 each coordinate Cu cation. 2 helical membrane-spanning segments follow: residues alanine 302 to tyrosine 322 and methionine 332 to leucine 352. Mg(2+) contacts are provided by histidine 362 and aspartate 363. Histidine 370 contacts heme a3. Histidine 372 provides a ligand contact to Fe(II)-heme a. 3 helical membrane-spanning segments follow: residues valine 374 to isoleucine 394, phenylalanine 408 to alanine 428, and alanine 446 to phenylalanine 466.

The protein belongs to the heme-copper respiratory oxidase family. Component of the cytochrome c oxidase (complex IV, CIV), a multisubunit enzyme composed of a catalytic core of 3 subunits and several supernumerary subunits. The complex exists as a monomer or a dimer and forms supercomplexes (SCs) in the inner mitochondrial membrane with ubiquinol-cytochrome c oxidoreductase (cytochrome b-c1 complex, complex III, CIII). It depends on heme as a cofactor. Cu cation is required as a cofactor.

Its subcellular location is the mitochondrion inner membrane. The enzyme catalyses 4 Fe(II)-[cytochrome c] + O2 + 8 H(+)(in) = 4 Fe(III)-[cytochrome c] + 2 H2O + 4 H(+)(out). The protein operates within energy metabolism; oxidative phosphorylation. Its function is as follows. Component of the cytochrome c oxidase, the last enzyme in the mitochondrial electron transport chain which drives oxidative phosphorylation. The respiratory chain contains 3 multisubunit complexes succinate dehydrogenase (complex II, CII), ubiquinol-cytochrome c oxidoreductase (cytochrome b-c1 complex, complex III, CIII) and cytochrome c oxidase (complex IV, CIV), that cooperate to transfer electrons derived from NADH and succinate to molecular oxygen, creating an electrochemical gradient over the inner membrane that drives transmembrane transport and the ATP synthase. Cytochrome c oxidase is the component of the respiratory chain that catalyzes the reduction of oxygen to water. Electrons originating from reduced cytochrome c in the intermembrane space (IMS) are transferred via the dinuclear copper A center (CU(A)) of subunit 2 and heme A of subunit 1 to the active site in subunit 1, a binuclear center (BNC) formed by heme A3 and copper B (CU(B)). The BNC reduces molecular oxygen to 2 water molecules using 4 electrons from cytochrome c in the IMS and 4 protons from the mitochondrial matrix. In Chlamydomonas reinhardtii (Chlamydomonas smithii), this protein is Cytochrome c oxidase subunit 1 (COX1).